The sequence spans 5065 residues: Dynein heavy chain-like protein 1 (5065 aa).

The tract at residues 1-1957 is stem; that stretch reads MELEKTHLIN…IIKMADATFE (1957 aa). Residues 1677 to 1705 adopt a coiled-coil conformation; sequence QMEGFQKQLDRLSDSLSKIQKALGEYLEK. Residues 1958–2179 form an AAA 1 region; sequence YGYEYLGMCE…LRSLKSVLNS (222 aa). 1996–2003 lines the ATP pocket; it reads GPAGTGKT. Residues 2203–2223 form a disordered region; that stretch reads FNETLDNNNNNDNNNERKTTT. Low complexity predominate over residues 2204 to 2215; it reads NETLDNNNNNDN. 3 AAA regions span residues 2281–2632, 2751–3004, and 3097–3367; these read NEIH…YEYI, DVDR…WKLA, and IFNE…GNRY. Residue 2319–2326 coordinates ATP; sequence GDVGTGKS. Residues 2507–2529 are disordered; the sequence is EKNQNGNENGNENEKKNINIINN. Residues 2790-2797 and 3135-3142 each bind ATP; these read GPPGSGKT and GASGAGKT. The interval 3386-3701 is stalk; the sequence is IDEKKEEVSS…ETFINLEEAS (316 aa). 2 coiled-coil regions span residues 3388–3466 and 3970–3997; these read EKKE…LDEQ and TMEKLKVQGAEASKEVNIAEEVMVEVEN. 2 AAA regions span residues 3754 to 3983 and 4289 to 4507; these read LSRP…EASK and FNKI…VVDS. The segment covering 4686–4705 has biased composition (basic and acidic residues); sequence KDKNKDEDKNKNKENDDNNK. Positions 4686 to 4727 are disordered; the sequence is KDKNKDEDKNKNKENDDNNKKHIGNNKLVISSSERTESETSE.

This sequence belongs to the dynein heavy chain family. Consists of at least two heavy chains and a number of intermediate and light chains.

It localises to the cytoplasm. The protein localises to the cytoskeleton. Acts as a motor for the intracellular retrograde motility of vesicles and organelles along microtubules. Dynein has ATPase activity; the force-producing power stroke is thought to occur on release of ADP. This is Dynein heavy chain-like protein 1 from Plasmodium falciparum (isolate 3D7).